Consider the following 513-residue polypeptide: Glutamate--tRNA ligase 2 (513 aa).

The 'HIGH' region motif lies at 11–21; sequence PSPTGFLHIGS. The short motif at 240 to 244 is the 'KMSKS' region element; the sequence is KLSKR. Lys243 is an ATP binding site.

The protein belongs to the class-I aminoacyl-tRNA synthetase family. Glutamate--tRNA ligase type 1 subfamily. In terms of assembly, monomer.

It is found in the cytoplasm. It catalyses the reaction tRNA(Glu) + L-glutamate + ATP = L-glutamyl-tRNA(Glu) + AMP + diphosphate. Functionally, catalyzes the attachment of glutamate to tRNA(Glu) in a two-step reaction: glutamate is first activated by ATP to form Glu-AMP and then transferred to the acceptor end of tRNA(Glu). In Rickettsia rickettsii (strain Iowa), this protein is Glutamate--tRNA ligase 2.